We begin with the raw amino-acid sequence, 329 residues long: Interferon regulatory factor 1 (329 aa).

Residues 5-113 (RMRMRPWLEM…SAVRVYRMLP (109 aa)) constitute a DNA-binding region (IRF tryptophan pentad repeat). The residue at position 78 (Lys78) is an N6-acetyllysine. Residues 93-166 (EVKDQSRNKG…LPDDHSSYTT (74 aa)) form a disordered region. A compositionally biased stretch (polar residues) spans 146-166 (DTFSDGLSSSTLPDDHSSYTT). Residues Lys276 and Lys300 each participate in a glycyl lysine isopeptide (Lys-Gly) (interchain with G-Cter in SUMO) cross-link.

It belongs to the IRF family. In terms of assembly, monomer. Homodimer. Interacts with EP300. Interacts with MYD88. Interacts with PIAS3. Interacts with SPOP. In terms of processing, phosphorylated by CK2 and this positively regulates its activity. Ubiquitinated in a SPOP-depedent manner. Sumoylation represses the transcriptional activity and displays enhanced resistance to protein degradation. Sumoylated by UBE2I/UBC9 and SUMO1. Inactivates the tumor suppressor activity. Elevated levels in tumor cells. Major site is Lys-276. Sumoylation is enhanced by PIAS3. Desumoylated by SENP1 in tumor cells and appears to compete with ubiquitination on C-terminal sites. Post-translationally, ubiquitinated. Appears to compete with sumoylation on C-terminal sites.

The protein localises to the nucleus. Its subcellular location is the cytoplasm. Activated by MYD88. Functionally, transcriptional regulator which displays a remarkable functional diversity in the regulation of cellular responses. Regulates transcription of IFN and IFN-inducible genes, host response to viral and bacterial infections, regulation of many genes expressed during hematopoiesis, inflammation, immune responses and cell proliferation and differentiation, regulation of the cell cycle and induction of growth arrest and programmed cell death following DNA damage. Stimulates both innate and acquired immune responses through the activation of specific target genes and can act as a transcriptional activator and repressor regulating target genes by binding to an interferon-stimulated response element (ISRE) in their promoters. Has an essentail role in IFNG-dependent immunity to mycobacteria. Binds to a consensus sequence in gene promoters. Its target genes for transcriptional activation activity are: genes involved in anti-viral response, such as IFN-alpha/beta, RIGI, TNFSF10/TRAIL, ZBP1, OAS1/2, PIAS1/GBP, EIF2AK2/PKR and RSAD2/viperin; antibacterial response, such as GBP2, GBP5, IRGB10 and NOS2/INOS; anti-proliferative response, such as p53/TP53, LOX and CDKN1A; apoptosis, such as BBC3/PUMA, CASP1, CASP7 and CASP8; immune response, such as IL7, IL12A/B and IL15, PTGS2/COX2 and CYBB; DNA damage responses and DNA repair, such as POLQ/POLH; MHC class I expression, such as TAP1, PSMB9/LMP2, PSME1/PA28A, PSME2/PA28B and B2M and MHC class II expression, such as CIITA; metabolic enzymes, such as ACOD1/IRG1. Represses genes involved in anti-proliferative response, such as BIRC5/survivin, CCNB1, CCNE1, CDK1, CDK2 and CDK4 and in immune response, such as FOXP3, IL4, ANXA2 and TLR4. Stimulates p53/TP53-dependent transcription through enhanced recruitment of EP300 leading to increased acetylation of p53/TP53. Plays an important role in immune response directly affecting NK maturation and activity, macrophage production of IL12, Th1 development and maturation of CD8+ T-cells. Also implicated in the differentiation and maturation of dendritic cells and in the suppression of regulatory T (Treg) cells development. Acts as a tumor suppressor and plays a role not only in antagonism of tumor cell growth but also in stimulating an immune response against tumor cells. The protein is Interferon regulatory factor 1 (Irf1) of Mus musculus (Mouse).